The following is an 88-amino-acid chain: MANTVSAKKMTRKIAKRTAINRSRRSRMRTFVRKVEEAIASGDQGQALTALRAAEPEIMRAAQNGIVHKNNASRKVSRLAARVKAIAA.

It belongs to the bacterial ribosomal protein bS20 family.

Functionally, binds directly to 16S ribosomal RNA. This Methylorubrum extorquens (strain CM4 / NCIMB 13688) (Methylobacterium extorquens) protein is Small ribosomal subunit protein bS20.